Reading from the N-terminus, the 259-residue chain is UPF0014 membrane protein slr1647 (259 aa).

7 consecutive transmembrane segments (helical) span residues 4 to 24, 34 to 54, 55 to 75, 98 to 118, 128 to 148, 195 to 215, and 225 to 245; these read ALIE…GAAI, LTGQ…VVGY, FLAV…LAIM, LWLS…VVII, YLIP…SLAG, MMVV…LAGG, and ILIM…VTAT.

Belongs to the UPF0014 family.

It localises to the cell membrane. The sequence is that of UPF0014 membrane protein slr1647 from Synechocystis sp. (strain ATCC 27184 / PCC 6803 / Kazusa).